The primary structure comprises 751 residues: ABC transporter G family member 22 (751 aa).

Positions 26-81 (ADIRSPHGSMDANGVPATAPAAVGGGGTLSRKSSRRLMGMSPGRSSGAGTHIRKSR) are disordered. Residues 157–403 (LKFRDVTYKV…FSSIGCSPLI (247 aa)) form the ABC transporter domain. 197–204 (GPSGSGKT) is a binding site for ATP. One can recognise an ABC transmembrane type-2 domain in the interval 498–707 (EQYCILFCRG…TYKLLLKVQY (210 aa)). 6 helical membrane-spanning segments follow: residues 516 to 536 (FSWL…LLWW), 552 to 572 (LLFF…IFAF), 602 to 622 (LPLD…MTGL), 634 to 654 (LTVF…GAIL), 666 to 686 (VTVM…PVFI), and 722 to 742 (GLTE…LAYL).

Belongs to the ABC transporter superfamily. ABCG family. Eye pigment precursor importer (TC 3.A.1.204) subfamily.

It localises to the membrane. The polypeptide is ABC transporter G family member 22 (ABCG22) (Arabidopsis thaliana (Mouse-ear cress)).